Reading from the N-terminus, the 265-residue chain is 3-methyl-2-oxobutanoate hydroxymethyltransferase (265 aa).

Mg(2+) is bound by residues aspartate 41 and aspartate 80. 3-methyl-2-oxobutanoate contacts are provided by residues 41 to 42 (DS), aspartate 80, and lysine 110. Glutamate 112 serves as a coordination point for Mg(2+). Residue glutamate 179 is the Proton acceptor of the active site.

This sequence belongs to the PanB family. Homodecamer; pentamer of dimers. Requires Mg(2+) as cofactor.

The protein resides in the cytoplasm. The catalysed reaction is 3-methyl-2-oxobutanoate + (6R)-5,10-methylene-5,6,7,8-tetrahydrofolate + H2O = 2-dehydropantoate + (6S)-5,6,7,8-tetrahydrofolate. It participates in cofactor biosynthesis; (R)-pantothenate biosynthesis; (R)-pantoate from 3-methyl-2-oxobutanoate: step 1/2. Catalyzes the reversible reaction in which hydroxymethyl group from 5,10-methylenetetrahydrofolate is transferred onto alpha-ketoisovalerate to form ketopantoate. The sequence is that of 3-methyl-2-oxobutanoate hydroxymethyltransferase from Pseudothermotoga lettingae (strain ATCC BAA-301 / DSM 14385 / NBRC 107922 / TMO) (Thermotoga lettingae).